Here is a 372-residue protein sequence, read N- to C-terminus: Gibberellin 20 oxidase 1 (372 aa).

In terms of domain architecture, Fe2OG dioxygenase spans 209-309 (RNDSIMRLNY…RRSLAFFLCP (101 aa)). Fe cation-binding residues include histidine 234, aspartate 236, and histidine 290. Arginine 300 is an active-site residue.

This sequence belongs to the iron/ascorbate-dependent oxidoreductase family. GA20OX subfamily. Requires Fe(2+) as cofactor. The cofactor is L-ascorbate. In terms of tissue distribution, preferentially expressed in reproductive organs. Expressed in the epithelium of embryos and the tapetum of anthers. Expressed at low levels in the shoot apical meristem.

The enzyme catalyses gibberellin A12 + 2 2-oxoglutarate + 3 O2 + H(+) = gibberellin A9 + 2 succinate + 3 CO2 + 2 H2O. The catalysed reaction is gibberellin A53 + 2 2-oxoglutarate + 3 O2 + H(+) = gibberellin A20 + 2 succinate + 3 CO2 + 2 H2O. Key oxidase enzyme in the biosynthesis of gibberellin. Catalyzes the conversion of GA12 and GA53 to GA9 and GA20 respectively, via a three-step oxidation at C-20 of the GA skeleton. The sequence is that of Gibberellin 20 oxidase 1 from Oryza sativa subsp. japonica (Rice).